Consider the following 143-residue polypeptide: Agaricus bisporus lectin (143 aa).

Ala29, Ser48, Gly49, and Asn73 together coordinate beta-D-Gal-(1-&gt;3)-alpha-D-GalNAc. 3 residues coordinate N-acetyl-beta-D-glucosamine: Thr82, Arg103, and Tyr114.

Belongs to the fungal fruit body lectin family. Homotetramer.

Its function is as follows. Lectin that recognizes O-linked galactose-beta-1,3-N-acetylgalactosamine, a disaccharide (Thomsen-Friedenreich antigen or T-disaccharide), present on cell surface glycoproteins. Can also bind galactose-beta-1,3-N-acetylglucosamine. Does not bind monosaccharides. Can be internalized by clathrin-coated vesicles after binding to surface glycoproteins. After internalization it inhibits nuclear import of nuclear localization signal dependent proteins. Inhibits proliferation of malignant cells without cytotoxicity for normal cells. In Agaricus bisporus (White button mushroom), this protein is Agaricus bisporus lectin.